The sequence spans 880 residues: Zinc-responsive transcriptional regulator ZAP1 (880 aa).

Disordered stretches follow at residues 1-26 (MDAL…AASA) and 140-164 (NNFH…PRRK). The span at 17 to 26 (ATSAATAASA) shows a compositional bias: low complexity. Residues 147 to 158 (SDPTSPQQNSKS) are compositionally biased toward polar residues. Residues Ser-156 and Ser-166 each carry the phosphoserine modification. The segment at 182–502 (KPNPPPGSDD…LTNNDLNDLI (321 aa)) is zinc-responsive domain 1 (ZRD(AD1)). The interval 207-402 (HPKSEANIKQ…YEVPFGKHIN (196 aa)) is transcription activation domain 1 (AD1). 2 disordered regions span residues 436–482 (NRCN…VNNS) and 510–555 (RFRN…PSSI). The span at 442-456 (NNLNGSNNNTAGATS) shows a compositional bias: low complexity. The span at 460-474 (QHHHHRIQFHSHKPN) shows a compositional bias: basic residues. Position 515 is a phosphoserine (Ser-515). A compositionally biased stretch (low complexity) spans 545–555 (SSLEDSLPSSI). The C2H2-type 1 zinc-finger motif lies at 579–604 (LKCKWKECPESCSSLFDLQRHLLKDH). Residues 579–641 (LKCKWKECPE…SIVNHINCQH (63 aa)) form a zinc-responsive domain 2 (ZRD(AD2)) region. Cys-581, Cys-586, His-599, His-604, Cys-618, Cys-623, His-636, and His-641 together coordinate Zn(2+). Residues 611–640 (HPMEPLACNWEDCDFLGDDTCSIVNHINCQ) form a transcription activation domain 2 (AD2) region. Residues 616–641 (LACNWEDCDFLGDDTCSIVNHINCQH) form a C2H2-type 2; atypical zinc finger. C2H2-type zinc fingers lie at residues 705 to 730 (VICQ…EAVH), 738 to 762 (YQCL…LKVH), 768 to 790 (YKCK…TRTH), 796 to 818 (YKCH…IRTH), and 824 to 846 (LQCK…IKTH). Residues 705 to 846 (VICQWDGCNK…SNLSKHIKTH (142 aa)) constitute a DNA-binding region (DNA-binding domain).

The protein localises to the nucleus. Its activity is regulated as follows. Active in zinc-limited cells and repressed in replete cells. Zinc controls ZAP1 DNA binding activity. Functionally, transcription regulator controlling zinc-responsive gene expression. Binds to zinc-responsive elements (ZREs) (consensus sequence 5'-ACCYYNAAGGT-3') in the promoter of target genes. Recruits SWI/SNF, SAGA, and Mediator complexes as coactivators in a zinc-responsive manner. Involved in zinc ion homeostasis by zinc-responsive transcriptional regulation of the zinc uptake system genes ZTR1 and ZTR2. Positively regulates ETR1 expression, affecting mitochondrial function. This is Zinc-responsive transcriptional regulator ZAP1 (ZAP1) from Saccharomyces cerevisiae (strain ATCC 204508 / S288c) (Baker's yeast).